Here is an 826-residue protein sequence, read N- to C-terminus: Putative pentatricopeptide repeat-containing protein At1g13630 (826 aa).

PPR repeat units follow at residues 228-262 (NEHT…DIGP), 263-297 (SVVS…GLVP), 298-332 (SVYS…GVEP), 333-367 (DSVT…GLSP), 368-402 (DVIT…GFEL), 404-438 (SIIP…GLSP), 439-473 (DLVA…RILP), 474-508 (NSRT…GETL), 509-543 (DIVL…GITP), 544-578 (SVAT…GLAP), 579-613 (SVVS…GIPP), 614-648 (TNVT…KCKQ), 661-695 (DQIT…NLDA), 696-730 (SSAT…NVSL), 731-765 (SKFA…GFNV), and 766-800 (SIRD…GISP).

The protein belongs to the PPR family. P subfamily.

This Arabidopsis thaliana (Mouse-ear cress) protein is Putative pentatricopeptide repeat-containing protein At1g13630.